Here is a 311-residue protein sequence, read N- to C-terminus: Olfactory receptor 4K1 (311 aa).

The Extracellular portion of the chain corresponds to 1–25 (MAHTNESMVSEFVLLGLSNSWGLQL). Asn5 carries an N-linked (GlcNAc...) asparagine glycan. The helical transmembrane segment at 26-49 (FFFAIFSIVYVTSVLGNVLIIVII) threads the bilayer. Residues 50–57 (SFDSHLNS) lie on the Cytoplasmic side of the membrane. The helical transmembrane segment at 58 to 79 (PMYFLLSNLSFIDICQSNFATP) threads the bilayer. Topologically, residues 80-100 (KMLVDFFIERKTISFEGCMAQ) are extracellular. Residues Cys97 and Cys189 are joined by a disulfide bond. The chain crosses the membrane as a helical span at residues 101-120 (IFVLHSFVGSEMMLLVAMAY). At 121-139 (DRFIAICKPLHYSTIMNRR) the chain is on the cytoplasmic side. Residues 140–158 (LCVIFVSISWAVGVLHSVS) traverse the membrane as a helical segment. The Extracellular portion of the chain corresponds to 159-195 (HLAFTVDLPFCGPNEVDSFFCDLPLVIELACMDTYEM). A helical transmembrane segment spans residues 196–219 (EIMTLTNSGLISLSCFLALIISYT). At 220-235 (IILIGVRCRSSSGSSK) the chain is on the cytoplasmic side. A helical membrane pass occupies residues 236–258 (ALSTLTAHITVVILFFGPCIYFY). Residues 259–269 (IWPFSRLPVDK) lie on the Extracellular side of the membrane. The chain crosses the membrane as a helical span at residues 270–289 (FLSVFYTVCTPLLNPIIYSL). Topologically, residues 290-311 (RNEDVKAAMWKLRNRHVNSWKN) are cytoplasmic.

It belongs to the G-protein coupled receptor 1 family.

It is found in the cell membrane. Functionally, odorant receptor. This Homo sapiens (Human) protein is Olfactory receptor 4K1 (OR4K1).